The sequence spans 407 residues: 1-deoxy-D-xylulose 5-phosphate reductoisomerase (407 aa).

Threonine 25, glycine 26, serine 27, isoleucine 28, asparagine 53, and asparagine 136 together coordinate NADPH. Lysine 137 contacts 1-deoxy-D-xylulose 5-phosphate. Glutamate 138 serves as a coordination point for NADPH. Residue aspartate 162 coordinates Mn(2+). Positions 163, 164, 188, and 211 each coordinate 1-deoxy-D-xylulose 5-phosphate. A Mn(2+)-binding site is contributed by glutamate 164. An NADPH-binding site is contributed by glycine 217. The 1-deoxy-D-xylulose 5-phosphate site is built by serine 224, asparagine 229, lysine 230, and glutamate 233. A Mn(2+)-binding site is contributed by glutamate 233.

It belongs to the DXR family. Requires Mg(2+) as cofactor. Mn(2+) serves as cofactor.

It carries out the reaction 2-C-methyl-D-erythritol 4-phosphate + NADP(+) = 1-deoxy-D-xylulose 5-phosphate + NADPH + H(+). The protein operates within isoprenoid biosynthesis; isopentenyl diphosphate biosynthesis via DXP pathway; isopentenyl diphosphate from 1-deoxy-D-xylulose 5-phosphate: step 1/6. Its function is as follows. Catalyzes the NADPH-dependent rearrangement and reduction of 1-deoxy-D-xylulose-5-phosphate (DXP) to 2-C-methyl-D-erythritol 4-phosphate (MEP). This chain is 1-deoxy-D-xylulose 5-phosphate reductoisomerase, found in Rhodopseudomonas palustris (strain HaA2).